Reading from the N-terminus, the 146-residue chain is Hemoglobin subunit beta (146 aa).

Position 1 is an N-acetylvaline (valine 1). The region spanning 2 to 146 is the Globin domain; it reads HLSGEEKACV…VANALAHKYH (145 aa). Threonine 12 carries the post-translational modification Phosphothreonine. Serine 44 carries the post-translational modification Phosphoserine. Residue lysine 59 is modified to N6-acetyllysine. Histidine 63 contributes to the heme b binding site. The residue at position 82 (lysine 82) is an N6-acetyllysine. A heme b-binding site is contributed by histidine 92. Position 93 is an S-nitrosocysteine (cysteine 93). The residue at position 144 (lysine 144) is an N6-acetyllysine.

This sequence belongs to the globin family. As to quaternary structure, heterotetramer of two alpha chains and two beta chains. As to expression, red blood cells.

Involved in oxygen transport from the lung to the various peripheral tissues. The chain is Hemoglobin subunit beta (HBB) from Suncus murinus (Asian house shrew).